The following is a 776-amino-acid chain: Serine/threonine-protein kinase SIK1 (776 aa).

In terms of domain architecture, Protein kinase spans 27 to 278 (YDVERTLGKG…IAQIRQHRWM (252 aa)). ATP is bound by residues 33 to 41 (LGKGNFAVV) and lysine 56. Aspartate 149 acts as the Proton acceptor in catalysis. Threonine 182 is modified (phosphothreonine; by LKB1 and GSK3-beta). Position 186 is a phosphoserine; by autocatalysis (serine 186). The region spanning 303–343 (DYNEQVLGIMQALGIDRQRTVESLQNSSYNHFAAIYYLLLE) is the UBA domain. Threonine 322 bears the Phosphothreonine; by CaMK1 mark. Disordered regions lie at residues 350–371 (STQPSSRATPAPARQPQLRNSD) and 449–472 (EARQGPSLEEEQEVQEPLPGSTGR). Residue serine 577 is modified to Phosphoserine; by PKA. The tract at residues 586 to 612 (KAFRQQLRKNARTKGFLGLNKIKGLAR) is RK-rich region. Residues 621–643 (GSRGGMSTFHTPAPSSGLQGCTA) are disordered. Polar residues predominate over residues 628–643 (TFHTPAPSSGLQGCTA).

The protein belongs to the protein kinase superfamily. CAMK Ser/Thr protein kinase family. AMPK subfamily. In terms of assembly, interacts (when phosphorylated on Thr-182 and Ser-186) with YWHAZ. Interacts with ATP1A1. The cofactor is Mg(2+). Phosphorylated at Thr-182 by STK11/LKB1 in complex with STE20-related adapter-alpha (STRADA) pseudo kinase and CAB39, leading to its activation. Phosphorylation at Thr-182 promotes autophosphorylation at Ser-186, which is required for sustained activity. Autophosphorylation at Ser-186 is maintained by sequential phosphorylation at Thr-182 by GSK3-beta. GSK3-beta cannot initiate phosphorylation at Thr-182, it can only maintain it. Phosphorylation at Ser-577 by PKA promotes translocation to the cytoplasm. Phosphorylation at Thr-322 by CaMK1 following intracellular sodium concentration leads to activation.

Its subcellular location is the cytoplasm. It localises to the nucleus. It carries out the reaction L-seryl-[protein] + ATP = O-phospho-L-seryl-[protein] + ADP + H(+). It catalyses the reaction L-threonyl-[protein] + ATP = O-phospho-L-threonyl-[protein] + ADP + H(+). Its activity is regulated as follows. Activated by phosphorylation on Thr-182. Also activated by phosphorylation on Thr-322 in response to increases in intracellular sodium in parallel with elevations in intracellular calcium through the reversible sodium/calcium exchanger. In terms of biological role, serine/threonine-protein kinase involved in various processes such as cell cycle regulation, gluconeogenesis and lipogenesis regulation, muscle growth and differentiation and tumor suppression. Phosphorylates HDAC4, HDAC5, PPME1, SREBF1, CRTC1/TORC1 and CRTC2/TORC2. Acts as a tumor suppressor and plays a key role in p53/TP53-dependent anoikis, a type of apoptosis triggered by cell detachment: required for phosphorylation of p53/TP53 in response to loss of adhesion and is able to suppress metastasis. Part of a sodium-sensing signaling network, probably by mediating phosphorylation of PPME1: following increases in intracellular sodium, SIK1 is activated by CaMK1 and phosphorylates PPME1 subunit of protein phosphatase 2A (PP2A), leading to dephosphorylation of sodium/potassium-transporting ATPase ATP1A1 and subsequent increase activity of ATP1A1. Acts as a regulator of muscle cells by phosphorylating and inhibiting class II histone deacetylases HDAC4 and HDAC5, leading to promote expression of MEF2 target genes in myocytes. Also required during cardiomyogenesis by regulating the exit of cardiomyoblasts from the cell cycle via down-regulation of CDKN1C/p57Kip2. Acts as a regulator of hepatic gluconeogenesis by phosphorylating and repressing the CREB-specific coactivators CRTC1/TORC1 and CRTC2/TORC2, leading to inhibit CREB activity. Also regulates hepatic lipogenesis by phosphorylating and inhibiting SREBF1. In concert with CRTC1/TORC1, regulates the light-induced entrainment of the circadian clock by attenuating PER1 induction; represses CREB-mediated transcription of PER1 by phosphorylating and deactivating CRTC1/TORC1. The polypeptide is Serine/threonine-protein kinase SIK1 (Sik1) (Rattus norvegicus (Rat)).